The sequence spans 72 residues: Protein SlyX homolog (72 aa).

Residues 53-72 (KDISPSNIRREEEETPPPHY) are disordered.

The protein belongs to the SlyX family.

The polypeptide is Protein SlyX homolog (Marinobacter nauticus (strain ATCC 700491 / DSM 11845 / VT8) (Marinobacter aquaeolei)).